A 739-amino-acid polypeptide reads, in one-letter code: UPF0313 protein YgiQ (739 aa).

The region spanning 372 to 650 (AYEMIRFSVN…KALLRYHDPA (279 aa)) is the Radical SAM core domain. [4Fe-4S] cluster contacts are provided by Cys-386, Cys-390, and Cys-393. Positions 686 to 739 (EARRQNRNTRPALTKHTPMATQCQTPATAKKASSTQSRPVNAGAKKRPKAAVGR) are disordered. Positions 704-724 (MATQCQTPATAKKASSTQSRP) are enriched in polar residues. Basic residues predominate over residues 729 to 739 (AKKRPKAAVGR).

This sequence belongs to the UPF0313 family. It depends on [4Fe-4S] cluster as a cofactor.

In Escherichia coli O157:H7, this protein is UPF0313 protein YgiQ.